Consider the following 150-residue polypeptide: Large ribosomal subunit protein bL9 (150 aa).

This sequence belongs to the bacterial ribosomal protein bL9 family.

In terms of biological role, binds to the 23S rRNA. This chain is Large ribosomal subunit protein bL9, found in Polynucleobacter necessarius subsp. necessarius (strain STIR1).